Reading from the N-terminus, the 141-residue chain is Large ribosomal subunit protein uL11 (141 aa).

Belongs to the universal ribosomal protein uL11 family. Part of the ribosomal stalk of the 50S ribosomal subunit. Interacts with L10 and the large rRNA to form the base of the stalk. L10 forms an elongated spine to which L12 dimers bind in a sequential fashion forming a multimeric L10(L12)X complex. In terms of processing, one or more lysine residues are methylated.

In terms of biological role, forms part of the ribosomal stalk which helps the ribosome interact with GTP-bound translation factors. The chain is Large ribosomal subunit protein uL11 from Streptococcus mutans serotype c (strain ATCC 700610 / UA159).